We begin with the raw amino-acid sequence, 33 residues long: Alpha-amanitin proprotein 2 (33 aa).

A propeptide spanning residues M1 to P10 is cleaved from the precursor. I11 bears the (3R,4R)-4,5-dihydroxyisoleucine; in form alpha-amanitin mark. At I11 the chain carries (3R,4S)-4-hydroxyisoleucine; in form gamma-amanitin. Residues I11–P18 constitute a cross-link (cyclopeptide (Ile-Pro)). The segment at residues W12 to C16 is a cross-link (2'-cysteinyl-6'-hydroxytryptophan sulfoxide (Trp-Cys)). 4-hydroxyproline is present on P18. Positions C19–A33 are excised as a propeptide.

This sequence belongs to the MSDIN fungal toxin family. In terms of processing, processed by the macrocyclase-peptidase enzyme POPB to yield a toxic cyclic octapeptide. POPB first removes 10 residues from the N-terminus. Conformational trapping of the remaining peptide forces the enzyme to release this intermediate rather than proceed to macrocyclization. The enzyme rebinds the remaining peptide in a different conformation and catalyzes macrocyclization of the N-terminal 8 residues. Expressed in basidiocarps.

Functionally, major toxin belonging to the bicyclic octapeptides amatoxins that acts by binding non-competitively to RNA polymerase II and greatly slowing the elongation of transcripts from target promoters. The chain is Alpha-amanitin proprotein 2 from Amanita exitialis (Guangzhou destroying angel).